Here is a 237-residue protein sequence, read N- to C-terminus: Dynein axonemal assembly factor 19 (237 aa).

Residues 8-33 adopt a coiled-coil conformation; sequence NFKALEKELQAALAADEKYKRENAAK.

The protein belongs to the DNAAF19/PR46b family. Homodimer.

The protein resides in the cytoplasm. The protein localises to the cell projection. It localises to the cilium. Its subcellular location is the flagellum. In terms of biological role, dynein-attachment factor required for cilia motility. This Mus musculus (Mouse) protein is Dynein axonemal assembly factor 19 (Dnaaf19).